A 693-amino-acid chain; its full sequence is A disintegrin and metalloproteinase with thrombospondin motifs like (693 aa).

Residues M1 to S24 form the signal peptide. Positions I67 to S80 are enriched in polar residues. The tract at residues I67–V91 is disordered. 2 N-linked (GlcNAc...) asparagine glycosylation sites follow: N124 and N194. The 233-residue stretch at I353–P585 folds into the Peptidase M12B domain. 2 disulfides stabilise this stretch: C485–C580 and C541–C564. Zn(2+) is bound at residue H514. A Metal-binding motif is present at residues H514–D525. The active site involves E515. Residues H518 and H524 each contribute to the Zn(2+) site. A glycan (N-linked (GlcNAc...) asparagine) is linked at N687.

It depends on Zn(2+) as a cofactor.

It localises to the secreted. The protein localises to the extracellular space. The protein resides in the extracellular matrix. In terms of biological role, involved in larval molting and metamorphosis. May degrade extracellular matrix (ECM) and basement membrane (BM) during the development of organs to allow degeneration and remodeling of tissues. This Bombyx mori (Silk moth) protein is A disintegrin and metalloproteinase with thrombospondin motifs like.